The sequence spans 417 residues: Phosphoglycerate kinase (417 aa).

14 residues coordinate (2R)-3-phosphoglycerate: V23, D24, F25, N26, Q39, R40, S63, H64, G66, R67, L122, R123, H170, and R171. S203 is modified (phosphoserine). Position 214 (G214) interacts with ADP. G214 contributes to the CDP binding site. 2 residues coordinate AMP: A215 and K216. A215 provides a ligand contact to ATP. Residue A215 coordinates Mg(2+). Position 219 (D219) interacts with CDP. D219 lines the Mg(2+) pocket. K220 contributes to the AMP binding site. Residue K220 participates in ATP binding. G238 lines the ADP pocket. A CDP-binding site is contributed by G238. AMP is bound by residues A239 and G313. A239 and G313 together coordinate ATP. G338 and F343 together coordinate CDP. An ADP-binding site is contributed by F343. E344 contacts AMP. 3 residues coordinate ATP: E344, D375, and T376. Residue D375 coordinates Mg(2+).

It belongs to the phosphoglycerate kinase family. As to quaternary structure, monomer. It depends on Mg(2+) as a cofactor. Dephosphorylated by PTC1 and PTC2 at Ser-203; the protein is cytosolic when dephosphorylated.

It is found in the cytoplasm. The protein localises to the cytosol. It localises to the mitochondrion. It carries out the reaction (2R)-3-phosphoglycerate + ATP = (2R)-3-phospho-glyceroyl phosphate + ADP. It functions in the pathway carbohydrate degradation; glycolysis; pyruvate from D-glyceraldehyde 3-phosphate: step 2/5. Its function is as follows. Catalyzes one of the two ATP producing reactions in the glycolytic pathway via the reversible conversion of 1,3-diphosphoglycerate to 3-phosphoglycerate. Both L- and D- forms of purine and pyrimidine nucleotides can be used as substrates, but the activity is much lower on pyrimidines. Negatively regulates the biosynthesis of acetyl-CoA from pyruvate in the mitochondrion and consequently also attenuates aflatoxin production. This Aspergillus flavus (strain ATCC 200026 / FGSC A1120 / IAM 13836 / NRRL 3357 / JCM 12722 / SRRC 167) protein is Phosphoglycerate kinase.